Consider the following 898-residue polypeptide: Endoplasmic reticulum metallopeptidase 1 (898 aa).

Met-1 is modified (N-acetylmethionine). The disordered stretch occupies residues 1–59 (MEWSSESAAVRRHRGTAERREGQAAASHPQREASAQEDARGGGRMRGRTESGGESRGAK). Topologically, residues 1–66 (MEWSSESAAV…GAKTALSEAR (66 aa)) are cytoplasmic. Residues 37 to 57 (EDARGGGRMRGRTESGGESRG) are compositionally biased toward basic and acidic residues. A helical membrane pass occupies residues 67–87 (TALALALYLLALRALVQLSLQ). Topologically, residues 88-393 (RLVLSRTSGL…SSSEYRHGSM (306 aa)) are lumenal. Asn-176 carries N-linked (GlcNAc...) asparagine glycosylation. Cys-198 and Cys-216 are joined by a disulfide. Zn(2+)-binding residues include His-199 and Asp-211. The active-site Proton acceptor is the Glu-245. Positions 246, 272, and 348 each coordinate Zn(2+). The chain crosses the membrane as a helical span at residues 394–414 (VFFDVLGLLVIAYPSRVGSII). Topologically, residues 415–451 (NYMVVMAVVLYLGRKLLRPNHSNSNYVRDFLCGLGIT) are cytoplasmic. The helical transmembrane segment at 452–472 (FISWFTSLVTVLIIAVFVSLI) threads the bilayer. Residues 473 to 480 (GQSLSWYN) lie on the Lumenal side of the membrane. The helical transmembrane segment at 481–501 (YFYIAVCLYGTATVAKIILIH) threads the bilayer. Topologically, residues 502–515 (TLAKRFYYVNASDL) are cytoplasmic. Residues 516-538 (YLGELFFDTSLFVHCGFLVALTA) traverse the membrane as a helical segment. Over 539-542 (QGFC) the chain is Lumenal. A helical membrane pass occupies residues 543–562 (SAFMSAVWVAFPLLTKLCVY). The Cytoplasmic portion of the chain corresponds to 563 to 573 (KDFKKHGAKGR). The helical transmembrane segment at 574-594 (FIALYLLGMFIPYLYGLYLIW) threads the bilayer. Residues 595-615 (AVFEMFTPILGRSGSEIPPDV) lie on the Lumenal side of the membrane. A helical membrane pass occupies residues 616-636 (VLASILAVCVMILSSYFITFI). Residues 637–645 (YLVNSTKKT) are Cytoplasmic-facing. Residues 646–666 (ILTLILVCAVTFLLVCSGAFF) traverse the membrane as a helical segment. Residues 667 to 898 (PYSSNPDSPK…WVSTYSLFVF (232 aa)) are Lumenal-facing. The N-linked (GlcNAc...) asparagine glycan is linked to Asn-724.

Belongs to the peptidase M28 family. Requires Zn(2+) as cofactor. As to expression, widely expressed, with highest levels in ovary, kidney, hypothalamus and hippocampus. Within the ovarian follicle, expressed in granulosa cells, but not in oocytes. Present in both preantral and antral follicles, but not in atretic antral follicle.

Its subcellular location is the endoplasmic reticulum membrane. Functionally, within the ovary, required for the organization of somatic cells and oocytes into discrete follicular structures. The sequence is that of Endoplasmic reticulum metallopeptidase 1 from Rattus norvegicus (Rat).